Here is a 196-residue protein sequence, read N- to C-terminus: Transmembrane protein 126A (196 aa).

Topologically, residues 1–34 (MENHKSNNTKENITIVDISRKINQLPEAERNLLE) are mitochondrial matrix. Residues 35 to 55 (HGSVYVGLNAALCGLIANSLF) traverse the membrane as a helical segment. The Mitochondrial intermembrane segment spans residues 56-57 (RR). Residues 58–78 (ILNVTKARIAAGLPMAWIPFL) form a helical membrane-spanning segment. At 79 to 107 (TTDITYRCFVSFPLNTGDLDCETCTITRS) the chain is on the mitochondrial matrix side. The helical transmembrane segment at 108–128 (GLIGLVIGGLYPVFLAIPVNG) threads the bilayer. Topologically, residues 129 to 159 (GLAARYQSALLPHKGNILSYWIRTSKPVFRK) are mitochondrial intermembrane. A helical membrane pass occupies residues 160-176 (MLFPIMLQTMFSAYLGS). Topologically, residues 177–196 (EQYKLLIKALQLSEPGKEIH) are mitochondrial matrix.

The protein belongs to the TMEM126 family. In terms of assembly, interacts with OXA1L; promoting cotranslational quality control in mitochondria.

It localises to the mitochondrion inner membrane. Functionally, protein required for the cotranslational protein quality control in the inner membrane of the mitochondria. Associates with newly synthesized polypeptides and may act as a chaperone that cooperates with OXA1L for the insertion of newly synthesized mitochondrial proteins into the inner membrane. Required for the assembly of the ND4 module of mitochondrial complex I. In Pongo abelii (Sumatran orangutan), this protein is Transmembrane protein 126A (TMEM126A).